We begin with the raw amino-acid sequence, 126 residues long: MAKQAKARRLAGIEAMAKVRTLRTSPRKLNLVAQSIRGLKVQRALNELEFSHKRIARDVRKALYSAISNAENNHNLDIDNLVVAEAFVGKNLIMKRFHARARGRASRIEKPFSEITIVVREQGEAA.

Belongs to the universal ribosomal protein uL22 family. As to quaternary structure, part of the 50S ribosomal subunit.

Its function is as follows. This protein binds specifically to 23S rRNA; its binding is stimulated by other ribosomal proteins, e.g. L4, L17, and L20. It is important during the early stages of 50S assembly. It makes multiple contacts with different domains of the 23S rRNA in the assembled 50S subunit and ribosome. The globular domain of the protein is located near the polypeptide exit tunnel on the outside of the subunit, while an extended beta-hairpin is found that lines the wall of the exit tunnel in the center of the 70S ribosome. In Phenylobacterium zucineum (strain HLK1), this protein is Large ribosomal subunit protein uL22.